A 455-amino-acid polypeptide reads, in one-letter code: Peroxisomal membrane protein PEX3 (455 aa).

Positions 113–125 are enriched in polar residues; the sequence is TVLSDDFSTSQEG. The disordered stretch occupies residues 113 to 135; the sequence is TVLSDDFSTSQEGAISEDTNKPP. The chain crosses the membrane as a helical span at residues 155–171; that stretch reads FLTLIYCESLLIVFLHL.

Belongs to the peroxin-3 family. Component of the peroxisomal docking complex, composed of at least PEX3, PEX13, PEX14 and PEX17. Component of the peroxisomal translocation complex, composed of at least PEX3, PEX2, PEX10 and PEX12. Interacts with PEX19. Interacts with the pexophagy receptor ATG30.

It is found in the peroxisome membrane. Its function is as follows. Peroxisomal membrane protein required for peroxisome biosynthesis. Shared component of both the peroxisomal docking complex and the peroxisomal translocation complex. The two types of peroxisomal matrix targeting signals, PTS1 and PTS2, are first recognized in the cytosol by their receptors PEX5 and PEX7, respectively, which then carry the cargo to the peroxisomal membrane. The peroxisomal targeting signal (PTS) receptor-cargo complexes interact with peroxisomal membrane protein (PMP) components of the docking complex. They have then additional downstream interactions with the translocation complex, leading to the transport of fully folded and oligomerized cargo into the peroxisome matrix. PEX3 acts as an anchoring site for PEX19 on the peroxisomal membrane and thus plays a crucial role in the assembly of the peroxisomal translocation complex. Is also essential for the interaction between the two complexes. Finally. PEX3 activates selective autophagy of peroxisomes (pexophagy) via interaction with the pexophagy receptor ATG30. The protein is Peroxisomal membrane protein PEX3 of Komagataella pastoris (Yeast).